Consider the following 527-residue polypeptide: Glutamyl-tRNA reductase 1, chloroplastic (527 aa).

Residues 1 to 43 (MAGATSATAAAGAFAAAKARGPAAACPWLVAAGGRRRSGVVRC) constitute a chloroplast transit peptide. Residues 124-127 (TCNR), S184, 189-191 (EGQ), and Q195 contribute to the substrate site. C125 functions as the Nucleophile in the catalytic mechanism. Residue 266–271 (GAGKMG) coordinates NADP(+).

The protein belongs to the glutamyl-tRNA reductase family. Homodimer.

The protein resides in the plastid. It localises to the chloroplast. It carries out the reaction (S)-4-amino-5-oxopentanoate + tRNA(Glu) + NADP(+) = L-glutamyl-tRNA(Glu) + NADPH + H(+). It functions in the pathway porphyrin-containing compound metabolism; protoporphyrin-IX biosynthesis; 5-aminolevulinate from L-glutamyl-tRNA(Glu): step 1/2. Catalyzes the NADPH-dependent reduction of glutamyl-tRNA(Glu) to glutamate 1-semialdehyde (GSA). This chain is Glutamyl-tRNA reductase 1, chloroplastic (HEMA1), found in Hordeum vulgare (Barley).